Consider the following 626-residue polypeptide: DNA mismatch repair protein MutL (626 aa).

The segment at Glu-377–Gly-413 is disordered. Residues Lys-383–Thr-393 are compositionally biased toward polar residues.

Belongs to the DNA mismatch repair MutL/HexB family.

In terms of biological role, this protein is involved in the repair of mismatches in DNA. It is required for dam-dependent methyl-directed DNA mismatch repair. May act as a 'molecular matchmaker', a protein that promotes the formation of a stable complex between two or more DNA-binding proteins in an ATP-dependent manner without itself being part of a final effector complex. The protein is DNA mismatch repair protein MutL of Bacillus anthracis (strain A0248).